A 1423-amino-acid chain; its full sequence is DNA-directed RNA polymerase subunit beta' (1423 aa).

Zn(2+) is bound by residues C71, C73, C86, and C89. The Mg(2+) site is built by D461, D463, and D465. 4 residues coordinate Zn(2+): C815, C889, C896, and C899.

The protein belongs to the RNA polymerase beta' chain family. The RNAP catalytic core consists of 2 alpha, 1 beta, 1 beta' and 1 omega subunit. When a sigma factor is associated with the core the holoenzyme is formed, which can initiate transcription. Mg(2+) is required as a cofactor. It depends on Zn(2+) as a cofactor.

It carries out the reaction RNA(n) + a ribonucleoside 5'-triphosphate = RNA(n+1) + diphosphate. Functionally, DNA-dependent RNA polymerase catalyzes the transcription of DNA into RNA using the four ribonucleoside triphosphates as substrates. The sequence is that of DNA-directed RNA polymerase subunit beta' from Actinobacillus pleuropneumoniae serotype 3 (strain JL03).